We begin with the raw amino-acid sequence, 766 residues long: Pyrophosphate-energized vacuolar membrane proton pump (766 aa).

The Intravacuolar segment spans residues 2-8 (GAAILPD). Residues 9 to 35 (LGTEILIPVCAVIGIAFALFQWLLVSK) traverse the membrane as a helical segment. The Cytoplasmic segment spans residues 36–84 (VKLSAVRDASPNAAAKNGYNDYLIEEEEGINDHNVVVKCAEIQNAISEG). The helical transmembrane segment at 85–114 (ATSFLFTEYKYVGIFMVAFAILIFLFLGSV) threads the bilayer. Topologically, residues 115-135 (EGFSTSPQACSYDKTKTCKPA) are intravacuolar. Cys-124 and Cys-132 are disulfide-bonded. A helical membrane pass occupies residues 136–163 (LATAIFSTVSFLLGGVTSLVSGFLGMKI). Residues 164–186 (ATYANARTTLEARKGVGKAFITA) lie on the Cytoplasmic side of the membrane. A helical transmembrane segment spans residues 187 to 216 (FRSGAVMGFLLAANGLLVLYIAINLFKIYY). The Intravacuolar portion of the chain corresponds to 217-219 (GDD). The helical transmembrane segment at 220–248 (WGGLFEAITGYGLGGSSMALFGRVGGGIY) threads the bilayer. The Cytoplasmic segment spans residues 249–286 (TKAADVGADLVGKVERNIPEDDPRNPAVIADNVGDNVG). Lys-250 contributes to the substrate binding site. Asp-253, Asp-257, and Asp-283 together coordinate Mg(2+). Residues 287–312 (DIAGMGSDLFGSYAESSCAALVVASI) traverse the membrane as a helical segment. Residues 313-320 (SSFGLNHE) lie on the Intravacuolar side of the membrane. A helical membrane pass occupies residues 321-346 (LTAMLYPLIVSSVGILVCLLTTLFAT). Over 347-354 (DFFEIKAV) the chain is Cytoplasmic. A helical transmembrane segment spans residues 355–382 (KEIEPALKKQLVISTVLMTIGVAVVSFV). The Intravacuolar portion of the chain corresponds to 383–401 (ALPTSFTIFNFGVQKDVKS). Residues 402–425 (WQLFLCVAVGLWAGLIIGFVTEYY) form a helical membrane-spanning segment. At 426-447 (TSNAYSPVQDVADSCRTGAATN) the chain is on the cytoplasmic side. Residues 448-472 (VIFGLALGYKSVIIPIFAIAISIFV) traverse the membrane as a helical segment. The Intravacuolar segment spans residues 473 to 478 (SFTFAA). The helical transmembrane segment at 479-505 (MYGIAVAALGMLSTIATGLAIDAYGPI) threads the bilayer. Residues 506–534 (SDNAGGIAEMAGMSHRIRERTDALDAAGN) lie on the Cytoplasmic side of the membrane. Mg(2+) contacts are provided by Asp-507 and Asn-534. Residues 535 to 563 (TTAAIGKGFAIGSAALVSLALFGAFVSRA) form a helical membrane-spanning segment. At 564–573 (SITTVDVLTP) the chain is on the intravacuolar side. Residues 574-602 (KVFIGLIVGAMLPYWFSAMTMKSVGSAAL) form a helical membrane-spanning segment. The Cytoplasmic portion of the chain corresponds to 603–631 (KMVEEVRRQFNTIPGLMEGTAKPDYATCV). Residues 632–660 (KISTDASIKEMIPPGALVMLTPLVVGILF) traverse the membrane as a helical segment. Residue Gly-661 is a topological domain, intravacuolar. The helical transmembrane segment at 662 to 689 (VETLSGVLAGSLVSGVQIAISASNTGGA) threads the bilayer. Residues 690-732 (WDNAKKYIEAGASEHARSLGPKGSDCHKAAVIGDTIGDPLKDT) lie on the Cytoplasmic side of the membrane. Mg(2+)-binding residues include Asp-691 and Asp-727. Lys-730 provides a ligand contact to substrate. Residues 733–758 (SGPSLNILIKLMAVESLVFAPFFATH) form a helical membrane-spanning segment. At 759 to 765 (GGLLFKI) the chain is on the intravacuolar side.

The protein belongs to the H(+)-translocating pyrophosphatase (TC 3.A.10) family. K(+)-stimulated subfamily. Homodimer.

Its subcellular location is the vacuole membrane. It catalyses the reaction diphosphate + H2O + H(+)(in) = 2 phosphate + 2 H(+)(out). With respect to regulation, inhibited by excess pyrophosphate as well as excess Mg(2+). Inhibition by ATP, GTP, and CTP is reversed by increasing the Mg(2+) concentration. This suggests that the substrate is a particular metal complex such as MgPPi(2-). Modification of Asp-283 with DCCD abolishes pyrophosphatase activity. Functionally, proton-translocating inorganic pyrophosphatase that contributes to the transtonoplast (from cytosol to vacuole lumen) H(+)-electrochemical potential difference. It establishes a proton gradient of similar and often greater magnitude than the H(+)-ATPase on the same membrane. The sequence is that of Pyrophosphate-energized vacuolar membrane proton pump from Vigna radiata var. radiata (Mung bean).